The following is a 440-amino-acid chain: Glucose-1-phosphate adenylyltransferase (440 aa).

Alpha-D-glucose 1-phosphate-binding positions include Y125, G190, 205-206 (EK), and S223.

The protein belongs to the bacterial/plant glucose-1-phosphate adenylyltransferase family. As to quaternary structure, homotetramer.

The enzyme catalyses alpha-D-glucose 1-phosphate + ATP + H(+) = ADP-alpha-D-glucose + diphosphate. The protein operates within glycan biosynthesis; glycogen biosynthesis. Functionally, involved in the biosynthesis of ADP-glucose, a building block required for the elongation reactions to produce glycogen. Catalyzes the reaction between ATP and alpha-D-glucose 1-phosphate (G1P) to produce pyrophosphate and ADP-Glc. The chain is Glucose-1-phosphate adenylyltransferase from Dechloromonas aromatica (strain RCB).